The chain runs to 1349 residues: ABC multidrug transporter G (1349 aa).

Positions 51 to 299 constitute an ABC transporter 1 domain; sequence RQFLGFLKGS…FEDMGFVCPK (249 aa). N-linked (GlcNAc...) asparagine glycosylation is present at asparagine 144. The next 4 membrane-spanning stretches (helical) occupy residues 407 to 427, 436 to 456, 492 to 512, and 523 to 543; these read LSLIIKVVSAILQALVCGSLF, SIFLRPGALFFPVLYFLLESM, IPVVLVQVSCFCIILYFMAAL, and WIIVIANTLCFMQMFRAVGAL. Asparagine 549 is a glycosylation site (N-linked (GlcNAc...) asparagine). The next 2 helical transmembrane spans lie at 550-570 and 580-600; these read ASKITGLLSTIFFVYGGYLIP and WIFYLNPGAYAFEALMANEFV. The N-linked (GlcNAc...) asparagine glycan is linked to asparagine 649. Residues 659–679 form a helical membrane-spanning segment; that stretch reads FGVIIGFWVFFIVLTALGLEL. The region spanning 721–963 is the ABC transporter 2 domain; it reads FTWHDLDYHV…VLDYFARHGA (243 aa). 757-764 contributes to the ATP binding site; sequence GCSGAGKT. N-linked (GlcNAc...) asparagine glycosylation occurs at asparagine 994. The next 6 membrane-spanning stretches (helical) occupy residues 1056 to 1076, 1085 to 1105, 1121 to 1143, 1166 to 1186, 1193 to 1213, and 1226 to 1246; these read VILHVFAALFSGFTFWKIGDG, FAIFNFIFVAPGCINQMQPFF, IYHWLAFIGAQTVSEIPYLILCA, MYLQMIFYEFLYTSIGQGIAA, FAAVMNPVLIGAGLVSFCGVV, and WLYYLDPFTYLVGGLLGEVLW. Residue asparagine 1287 is glycosylated (N-linked (GlcNAc...) asparagine). Residues 1318-1338 traverse the membrane as a helical segment; that stretch reads TGITALFCVSSYAMVFLMMKL.

It belongs to the ABC transporter superfamily. ABCG family. PDR (TC 3.A.1.205) subfamily.

The protein resides in the cell membrane. In terms of biological role, ABC efflux transporter that seems not to be able to transport azoles, nor rhodamine 6G (R-6G), a known substrate for many ABC transporters. This Aspergillus fumigatus (strain ATCC MYA-4609 / CBS 101355 / FGSC A1100 / Af293) (Neosartorya fumigata) protein is ABC multidrug transporter G.